Reading from the N-terminus, the 781-residue chain is Cation channel sperm-associated auxiliary subunit delta (781 aa).

The first 20 residues, 1-20 (MLVLMLVVATTFRLCPLVKA), serve as a signal peptide directing secretion. At 21-725 (RPLCRIRTLR…YGAFPLSIFP (705 aa)) the chain is on the extracellular side. Cystine bridges form between Cys24–Cys370, Cys60–Cys146, Cys145–Cys153, Cys388–Cys497, Cys511–Cys705, Cys526–Cys573, and Cys625–Cys655. Asn231, Asn294, Asn458, Asn473, Asn539, and Asn631 each carry an N-linked (GlcNAc...) asparagine glycan. The chain crosses the membrane as a helical span at residues 726-749 (PEITIVLLTAATLLSIWLAYMIPQ). The Cytoplasmic portion of the chain corresponds to 750–781 (LLHTEQGLEGNGFWVRLYQRCRKSCACLWGRC).

It belongs to the CATSPERD family. In terms of assembly, component of the CatSper complex or CatSpermasome composed of the core pore-forming members CATSPER1, CATSPER2, CATSPER3 and CATSPER4 as well as auxiliary members CATSPERB, CATSPERG, CATSPERD, CATSPERE, CATSPERZ, C2CD6/CATSPERT, TMEM249, TMEM262 and EFCAB9. HSPA1 may be an additional auxiliary complex member. The core complex members CATSPER1, CATSPER2, CATSPER3 and CATSPER4 form a heterotetrameric channel. The auxiliary CATSPERB, CATSPERG, CATSPERD and CATSPERE subunits form a pavilion-like structure over the pore which stabilizes the complex through interactions with CATSPER4, CATSPER3, CATSPER1 and CATSPER2 respectively. TMEM262/CATSPERH interacts with CATSPERB, further stabilizing the complex. C2CD6/CATSPERT interacts at least with CATSPERD and is required for targeting the CatSper complex in the flagellar membrane.

It is found in the cell projection. Its subcellular location is the cilium. The protein localises to the flagellum membrane. Auxiliary component of the CatSper complex, a complex involved in sperm cell hyperactivation. Sperm cell hyperactivation is needed for sperm motility which is essential late in the preparation of sperm for fertilization. Required for CATSPER1 stability before intraflagellar transport and/or incorporation of the CatSper complex channel into the flagellar membrane. In Bos taurus (Bovine), this protein is Cation channel sperm-associated auxiliary subunit delta.